A 272-amino-acid polypeptide reads, in one-letter code: Dermonecrotic toxin SpeSicTox-betaIB2a (272 aa).

His-5 is an active-site residue. Residues Glu-25 and Asp-27 each contribute to the Mg(2+) site. Residue His-41 is the Nucleophile of the active site. 2 disulfides stabilise this stretch: Cys-45/Cys-51 and Cys-47/Cys-191. Position 85 (Asp-85) interacts with Mg(2+).

Belongs to the arthropod phospholipase D family. Class II subfamily. It depends on Mg(2+) as a cofactor. As to expression, expressed by the venom gland.

The protein localises to the secreted. It catalyses the reaction an N-(acyl)-sphingosylphosphocholine = an N-(acyl)-sphingosyl-1,3-cyclic phosphate + choline. The enzyme catalyses an N-(acyl)-sphingosylphosphoethanolamine = an N-(acyl)-sphingosyl-1,3-cyclic phosphate + ethanolamine. It carries out the reaction a 1-acyl-sn-glycero-3-phosphocholine = a 1-acyl-sn-glycero-2,3-cyclic phosphate + choline. The catalysed reaction is a 1-acyl-sn-glycero-3-phosphoethanolamine = a 1-acyl-sn-glycero-2,3-cyclic phosphate + ethanolamine. Its function is as follows. Dermonecrotic toxins cleave the phosphodiester linkage between the phosphate and headgroup of certain phospholipids (sphingolipid and lysolipid substrates), forming an alcohol (often choline) and a cyclic phosphate. This toxin acts on sphingomyelin (SM). It may also act on ceramide phosphoethanolamine (CPE), lysophosphatidylcholine (LPC) and lysophosphatidylethanolamine (LPE), but not on lysophosphatidylserine (LPS), and lysophosphatidylglycerol (LPG). It acts by transphosphatidylation, releasing exclusively cyclic phosphate products as second products. Induces dermonecrosis, hemolysis, increased vascular permeability, edema, inflammatory response, and platelet aggregation. The protein is Dermonecrotic toxin SpeSicTox-betaIB2a of Sicarius peruensis (Six-eyed sand spider).